A 306-amino-acid chain; its full sequence is Glutamyl-Q tRNA(Asp) synthetase (306 aa).

Residues 29–33 (RFAPS) and D65 each bind L-glutamate. The 'HIGH' region motif lies at 32–42 (PSPTGPLHLGN). Zn(2+)-binding residues include C121, C123, Y141, and C145. L-glutamate-binding residues include Y188 and R206. Positions 244 to 248 (KLAKR) match the 'KMSKS' region motif. Residue K247 participates in ATP binding.

The protein belongs to the class-I aminoacyl-tRNA synthetase family. GluQ subfamily. Zn(2+) serves as cofactor.

Its function is as follows. Catalyzes the tRNA-independent activation of glutamate in presence of ATP and the subsequent transfer of glutamate onto a tRNA(Asp). Glutamate is transferred on the 2-amino-5-(4,5-dihydroxy-2-cyclopenten-1-yl) moiety of the queuosine in the wobble position of the QUC anticodon. In Prochlorococcus marinus (strain MIT 9313), this protein is Glutamyl-Q tRNA(Asp) synthetase.